A 297-amino-acid polypeptide reads, in one-letter code: Cyclin-dependent kinase 1 (297 aa).

The residue at position 1 (methionine 1) is an N-acetylmethionine. Tyrosine 4 is modified (phosphotyrosine; by PKR). Positions 4-287 (YIKIEKIGEG…GKMALKHPYF (284 aa)) constitute a Protein kinase domain. N6-acetyllysine; alternate is present on residues lysine 6 and lysine 9. Residues lysine 6 and lysine 9 each participate in a glycyl lysine isopeptide (Lys-Gly) (interchain with G-Cter in SUMO2); alternate cross-link. 10–18 (IGEGTYGVV) lines the ATP pocket. Threonine 14 bears the Phosphothreonine; by PKMYT1 mark. Phosphotyrosine; by PKMYT1, WEE1, WEE2 and PKC/PRKCD is present on tyrosine 15. A Phosphotyrosine; by WEE1 and WEE2 modification is found at tyrosine 15. Tyrosine 19 carries the phosphotyrosine modification. Residue lysine 20 forms a Glycyl lysine isopeptide (Lys-Gly) (interchain with G-Cter in SUMO2) linkage. Lysine 33 provides a ligand contact to ATP. A Phosphoserine modification is found at serine 39. Residue tyrosine 77 is modified to Phosphotyrosine. Aspartate 128 (proton acceptor) is an active-site residue. Residue lysine 139 forms a Glycyl lysine isopeptide (Lys-Gly) (interchain with G-Cter in SUMO2) linkage. At threonine 141 the chain carries Phosphothreonine. At threonine 161 the chain carries Phosphothreonine; by CAK. Serine 178 carries the phosphoserine modification. Threonine 222 carries the post-translational modification Phosphothreonine. N6-succinyllysine is present on lysine 245. Serine 248 is subject to Phosphoserine.

Belongs to the protein kinase superfamily. CMGC Ser/Thr protein kinase family. CDC2/CDKX subfamily. Forms a stable but non-covalent complex with a regulatory subunit and with a cyclin. Interacts with cyclins-B (CCNB1, CCNB2 and CCNB3) to form a serine/threonine kinase holoenzyme complex also known as maturation promoting factor (MPF). The cyclin subunit imparts substrate specificity to the complex. Can also form CDK1-cylin-D and CDK1-cyclin-E complexes that phosphorylate RB1 in vitro. Binds to RB1 and other transcription factors such as FOXO1 and RUNX2. Promotes G2-M transition when in complex with a cyclin-B. Interacts with DLGAP5. Binds to the CDK inhibitors CDKN1A/p21 and CDKN1B/p27. Isoform 2 is unable to complex with cyclin-B1 and also fails to bind to CDKN1A/p21. Interacts with catalytically active CCNB1 and RALBP1 during mitosis to form an endocytotic complex during interphase. Associates with cyclins-A and B1 during S-phase in regenerating hepatocytes. Interacts with FANCC. Interacts with CEP63; this interaction recruits CDK1 to centrosomes. Interacts with CENPA. Interacts with NR1D1. Interacts with proteasome subunit PSMA8; to participate in meiosis progression during spermatogenesis. Post-translationally, phosphorylation at Thr-161 by CAK/CDK7 activates kinase activity. Phosphorylation at Thr-14 and Tyr-15 by PKMYT1 prevents nuclear translocation. Phosphorylation at Tyr-15 by WEE1 and WEE2 inhibits the protein kinase activity and acts as a negative regulator of entry into mitosis (G2 to M transition). Phosphorylation by PKMYT1 and WEE1 takes place during mitosis to keep CDK1-cyclin-B complexes inactive until the end of G2. By the end of G2, PKMYT1 and WEE1 are inactivated, but CDC25A and CDC25B are activated. Dephosphorylation by active CDC25A and CDC25B at Thr-14 and Tyr-15, leads to CDK1 activation at the G2-M transition. Phosphorylation at Tyr-15 by WEE2 during oogenesis is required to maintain meiotic arrest in oocytes during the germinal vesicle (GV) stage, a long period of quiescence at dictyate prophase I, leading to prevent meiotic reentry. Phosphorylation by WEE2 is also required for metaphase II exit during egg activation to ensure exit from meiosis in oocytes and promote pronuclear formation. Phosphorylated at Tyr-4 by PKR/EIF2AK2 upon genotoxic stress. This phosphorylation triggers CDK1 polyubiquitination and subsequent proteolysis, thus leading to G2 arrest. In response to UV irradiation, phosphorylation at Tyr-15 by PRKCD activates the G2/M DNA damage checkpoint. In terms of processing, polyubiquitinated upon genotoxic stress.

It localises to the nucleus. Its subcellular location is the cytoplasm. The protein localises to the mitochondrion. It is found in the cytoskeleton. The protein resides in the microtubule organizing center. It localises to the centrosome. Its subcellular location is the spindle. The enzyme catalyses L-seryl-[protein] + ATP = O-phospho-L-seryl-[protein] + ADP + H(+). The catalysed reaction is L-threonyl-[protein] + ATP = O-phospho-L-threonyl-[protein] + ADP + H(+). It carries out the reaction [DNA-directed RNA polymerase] + ATP = phospho-[DNA-directed RNA polymerase] + ADP + H(+). With respect to regulation, phosphorylation at Thr-14 or Tyr-15 inactivates the enzyme, while phosphorylation at Thr-161 activates it. Activated through a multistep process; binding to cyclin-B is required for relocation of cyclin-kinase complexes to the nucleus, activated by CAK/CDK7-mediated phosphorylation on Thr-161, and CDC25-mediated dephosphorylation of inhibitory phosphorylation on Thr-14 and Tyr-15. Activity is restricted during S-phase in an ATR-dependent manner to prevent premature entry into G2. Repressed by the CDK inhibitors CDKN1A/p21 and CDKN1B/p27 during the G1 phase and by CDKN1A/p21 at the G1-S checkpoint upon DNA damage. Transient activation by rapid and transient dephosphorylation at Tyr-15 triggered by TGFB1. In terms of biological role, plays a key role in the control of the eukaryotic cell cycle by modulating the centrosome cycle as well as mitotic onset; promotes G2-M transition via association with multiple interphase cyclins. Phosphorylates PARVA/actopaxin, APC, AMPH, APC, BARD1, Bcl-xL/BCL2L1, BRCA2, CALD1, CASP8, CDC7, CDC20, CDC25A, CDC25C, CC2D1A, CENPA, CSNK2 proteins/CKII, FZR1/CDH1, CDK7, CEBPB, CHAMP1, DMD/dystrophin, EEF1 proteins/EF-1, EZH2, KIF11/EG5, EGFR, FANCG, FOS, GFAP, GOLGA2/GM130, GRASP1, UBE2A/hHR6A, HIST1H1 proteins/histone H1, HMGA1, HIVEP3/KRC, KAT5, LMNA, LMNB, LBR, MKI67, LATS1, MAP1B, MAP4, MARCKS, MCM2, MCM4, MKLP1, MLST8, MYB, NEFH, NFIC, NPC/nuclear pore complex, PITPNM1/NIR2, NPM1, NCL, NUCKS1, NPM1/numatrin, ORC1, PRKAR2A, EEF1E1/p18, EIF3F/p47, p53/TP53, NONO/p54NRB, PAPOLA, PLEC/plectin, RB1, TPPP, UL40/R2, RAB4A, RAP1GAP, RBBP8/CtIP, RCC1, RPS6KB1/S6K1, KHDRBS1/SAM68, ESPL1, SKI, BIRC5/survivin, STIP1, TEX14, beta-tubulins, MAPT/TAU, NEDD1, VIM/vimentin, TK1, FOXO1, RUNX1/AML1, SAMHD1, SIRT2, CGAS, ZAR1 and RUNX2. CDK1/CDC2-cyclin-B controls pronuclear union in interphase fertilized eggs. Essential for early stages of embryonic development. During G2 and early mitosis, CDC25A/B/C-mediated dephosphorylation activates CDK1/cyclin complexes which phosphorylate several substrates that trigger at least centrosome separation, Golgi dynamics, nuclear envelope breakdown and chromosome condensation. Once chromosomes are condensed and aligned at the metaphase plate, CDK1 activity is switched off by WEE1- and PKMYT1-mediated phosphorylation to allow sister chromatid separation, chromosome decondensation, reformation of the nuclear envelope and cytokinesis. Phosphorylates KRT5 during prometaphase and metaphase. Inactivated by PKR/EIF2AK2- and WEE1-mediated phosphorylation upon DNA damage to stop cell cycle and genome replication at the G2 checkpoint thus facilitating DNA repair. Reactivated after successful DNA repair through WIP1-dependent signaling leading to CDC25A/B/C-mediated dephosphorylation and restoring cell cycle progression. Catalyzes lamin (LMNA, LMNB1 and LMNB2) phosphorylation at the onset of mitosis, promoting nuclear envelope breakdown. In proliferating cells, CDK1-mediated FOXO1 phosphorylation at the G2-M phase represses FOXO1 interaction with 14-3-3 proteins and thereby promotes FOXO1 nuclear accumulation and transcription factor activity, leading to cell death of postmitotic neurons. The phosphorylation of beta-tubulins regulates microtubule dynamics during mitosis. NEDD1 phosphorylation promotes PLK1-mediated NEDD1 phosphorylation and subsequent targeting of the gamma-tubulin ring complex (gTuRC) to the centrosome, an important step for spindle formation. In addition, CC2D1A phosphorylation regulates CC2D1A spindle pole localization and association with SCC1/RAD21 and centriole cohesion during mitosis. The phosphorylation of Bcl-xL/BCL2L1 after prolongated G2 arrest upon DNA damage triggers apoptosis. In contrast, CASP8 phosphorylation during mitosis prevents its activation by proteolysis and subsequent apoptosis. This phosphorylation occurs in cancer cell lines, as well as in primary breast tissues and lymphocytes. EZH2 phosphorylation promotes H3K27me3 maintenance and epigenetic gene silencing. CALD1 phosphorylation promotes Schwann cell migration during peripheral nerve regeneration. CDK1-cyclin-B complex phosphorylates NCKAP5L and mediates its dissociation from centrosomes during mitosis. Regulates the amplitude of the cyclic expression of the core clock gene BMAL1 by phosphorylating its transcriptional repressor NR1D1, and this phosphorylation is necessary for SCF(FBXW7)-mediated ubiquitination and proteasomal degradation of NR1D1. Phosphorylates EML3 at 'Thr-881' which is essential for its interaction with HAUS augmin-like complex and TUBG1. Phosphorylates CGAS during mitosis, leading to its inhibition, thereby preventing CGAS activation by self DNA during mitosis. Phosphorylates SKA3 during mitosis which promotes SKA3 binding to the NDC80 complex and anchoring of the SKA complex to kinetochores, to enable stable attachment of mitotic spindle microtubules to kinetochores. The protein is Cyclin-dependent kinase 1 (Cdk1) of Rattus norvegicus (Rat).